The primary structure comprises 307 residues: Ribonuclease Z (307 aa).

Zn(2+) contacts are provided by His-61, His-63, Asp-65, His-66, His-138, Asp-208, and His-264. The active-site Proton acceptor is Asp-65.

Belongs to the RNase Z family. Homodimer. It depends on Zn(2+) as a cofactor.

It catalyses the reaction Endonucleolytic cleavage of RNA, removing extra 3' nucleotides from tRNA precursor, generating 3' termini of tRNAs. A 3'-hydroxy group is left at the tRNA terminus and a 5'-phosphoryl group is left at the trailer molecule.. Functionally, zinc phosphodiesterase, which displays some tRNA 3'-processing endonuclease activity. Probably involved in tRNA maturation, by removing a 3'-trailer from precursor tRNA. Also shows activity toward a broad range of substrates, such as intron containing pre-tRNAs, 5' extended precursors and non-RNA substrates. This is Ribonuclease Z from Pyrococcus furiosus (strain ATCC 43587 / DSM 3638 / JCM 8422 / Vc1).